The following is a 464-amino-acid chain: RCC1-like G exchanging factor-like protein (464 aa).

A mitochondrion-targeting transit peptide spans 1-37 (MALVALVAGARLGRRLSGPGLGRGHWTAAGRSRSRRE). RCC1 repeat units follow at residues 58-124 (ADRV…LSSK), 128-191 (VTKV…VLTD), 193-247 (EGVF…FLTD), 248-300 (KGEV…AVSA), 302-353 (GGLF…VLNG), 354-411 (EGHV…ALTN), and 412-461 (KGEL…TLAK).

Forms a regulatory protein-RNA complex, consisting of RCC1L, NGRN, RPUSD3, RPUSD4, TRUB2, FASTKD2 and 16S mt-rRNA. Interacts with 16S mt-rRNA; this interaction is direct. Interacts with OPA1; this interaction is direct. In terms of assembly, asociates with the mitochondrial ribosome large subunit (mt-LSU). As to quaternary structure, asociates with the mitochondrial ribosome small subunit (mt-SSU). In terms of tissue distribution, ubiquitous.

It localises to the mitochondrion membrane. The protein resides in the mitochondrion inner membrane. In terms of biological role, guanine nucleotide exchange factor (GEF) for mitochondrial dynamin-related GTPase OPA1. Activates OPA1, by exchanging bound GDP for free GTP, and drives OPA1 and MFN1-dependent mitochondrial fusion. Plays an essential role in mitochondrial ribosome biogenesis. As a component of a functional protein-RNA module, consisting of RCC1L, NGRN, RPUSD3, RPUSD4, TRUB2, FASTKD2 and 16S mitochondrial ribosomal RNA (16S mt-rRNA), controls 16S mt-rRNA abundance and is required for intra-mitochondrial translation of core subunits of the oxidative phosphorylation system. Its function is as follows. Plays an essential role in mitochondrial ribosome biogenesis via its association with GTPases that play a role in the assembly of the large ribosome subunit. Plays an essential role in mitochondrial ribosome biogenesis via its association with GTPases that play a role in the assembly of the small ribosome subunit. In Homo sapiens (Human), this protein is RCC1-like G exchanging factor-like protein.